A 460-amino-acid chain; its full sequence is Inactive 7-epi-sesquithujene synthase (460 aa).

2 residues coordinate Mg(2+): Asp-308 and Asp-312. 2 residues coordinate substrate: Asp-308 and Asp-312. Residues 308–312 (DDMFD) carry the DDXXD motif motif.

It belongs to the terpene synthase family. As to quaternary structure, monomer. The cofactor is Mg(2+). Mn(2+) serves as cofactor.

The protein resides in the cytoplasm. The protein operates within secondary metabolite biosynthesis; terpenoid biosynthesis. Non-functional sesquiterpene synthase due to a frameshift removing part of the catalytic site. The polypeptide is Inactive 7-epi-sesquithujene synthase (Zea mays (Maize)).